A 175-amino-acid chain; its full sequence is Interferon a3 (175 aa).

The first 23 residues, 1 to 23 (MYTMQSWSCIFLIICSMQSVCHC), serve as a signal peptide directing secretion. Cys24 and Cys120 are disulfide-bonded.

It belongs to the alpha/beta interferon family. As to expression, isoform 1 and isoform 2 are expressed in several tissues, including gill, spleen, intestine, kidney and skin.

It localises to the secreted. Its subcellular location is the cytoplasm. It is found in the cytosol. In terms of biological role, key player in antiviral response. Induces expression of TLRs, including that of TLR3, TLR9 and TLR8a1, and that of cytosolic pattern recognition receptors, including RIGI, IFIH1/MDA5 and DHX58/LGP2. Also induces MX1 and its own expression. In the presence of intracellular IFNAR2 (iIFNAR2) and IFNAR1B, intracellular isoform 3 may mediate STAT1 and STAT2 phosphorylation and induction of EIF2AK2, MX1 and RSAD2. In Oncorhynchus mykiss (Rainbow trout), this protein is Interferon a3.